Consider the following 170-residue polypeptide: Myosin regulatory light chain 1 (170 aa).

Positions 1–13 are enriched in basic residues; it reads MSKAAKKKSSKKR. Residues 1–22 form a disordered region; that stretch reads MSKAAKKKSSKKRSGSEAAQFD. EF-hand domains follow at residues 24-59 and 93-128; these read KTIQ…MGQI and DPEA…KRGE. Positions 37, 39, 41, and 48 each coordinate Ca(2+).

Myosin is a hexamer of 2 heavy chains and 4 light chains (two regulatory light chains and two essential light chains).

This is Myosin regulatory light chain 1 (mlc-1) from Caenorhabditis elegans.